Consider the following 534-residue polypeptide: Cytokinin dehydrogenase 5 (534 aa).

Residues 1 to 20 form the signal peptide; that stretch reads MAWCLVFMVFLIYCLISTVG. Positions 59 to 243 constitute an FAD-binding PCMH-type domain; that stretch reads TSAEPLAVFH…TRARIALEPA (185 aa). FAD is bound by residues alanine 93, glycine 95, and glycine 97. Histidine 98 carries the pros-8alpha-FAD histidine modification. FAD is bound by residues serine 99 and glutamine 103. Asparagine 152 is a glycosylation site (N-linked (GlcNAc...) asparagine). The FAD site is built by aspartate 167, serine 172, serine 178, isoleucine 182, and isoleucine 233. A glycan (N-linked (GlcNAc...) asparagine) is linked at asparagine 256. Positions 484 and 522 each coordinate FAD.

It belongs to the oxygen-dependent FAD-linked oxidoreductase family. In terms of assembly, monomer. Requires FAD as cofactor. In terms of tissue distribution, expressed in inflorescence meristems.

It is found in the secreted. It localises to the extracellular space. The catalysed reaction is N(6)-dimethylallyladenine + A + H2O = 3-methyl-2-butenal + adenine + AH2. In terms of biological role, catalyzes the oxidation of cytokinins, a family of N(6)-substituted adenine derivatives that are plant hormones, where the substituent is an isopentenyl group. This is Cytokinin dehydrogenase 5 (CKX5) from Oryza sativa subsp. japonica (Rice).